We begin with the raw amino-acid sequence, 267 residues long: MPGLFQAEGIVLKSRDYQETDQLLTILTRTHGKLEAIVKGVRKPRSSLRSGTQQLCRSRFLFYAGKSLATVTQCEVQEIYGPLRQDLKRLAYAYYLVEIADGVVMPGQVNQAMYLLLQQGLEALGELEPALVARAFEARTLKLLGLAPRLEACALCQRELKGNGRVAIAPAAGGALCPECRGHQGREYLVSRGGVKTWQQLNRLNWSYLKRLQINPMLMGELGEVMPAFLEYYLDRRLRSRAFINEIGGDNIDGPGKNRPVAQAPGT.

It belongs to the RecO family.

In terms of biological role, involved in DNA repair and RecF pathway recombination. The polypeptide is DNA repair protein RecO (Moorella thermoacetica (strain ATCC 39073 / JCM 9320)).